Here is a 177-residue protein sequence, read N- to C-terminus: Large ribosomal subunit protein uL6 (177 aa).

This sequence belongs to the universal ribosomal protein uL6 family. Part of the 50S ribosomal subunit.

In terms of biological role, this protein binds to the 23S rRNA, and is important in its secondary structure. It is located near the subunit interface in the base of the L7/L12 stalk, and near the tRNA binding site of the peptidyltransferase center. This is Large ribosomal subunit protein uL6 from Rhodospirillum rubrum (strain ATCC 11170 / ATH 1.1.1 / DSM 467 / LMG 4362 / NCIMB 8255 / S1).